Here is a 124-residue protein sequence, read N- to C-terminus: Fluoride-specific ion channel FluC (124 aa).

The next 4 helical transmembrane spans lie at 1-21 (MIAL…LRFA), 37-57 (GTLA…GLFL), 69-89 (GLIV…LDTV), and 99-119 (LALG…WAGL). Positions 76 and 79 each coordinate Na(+).

Belongs to the fluoride channel Fluc/FEX (TC 1.A.43) family.

It localises to the cell inner membrane. It catalyses the reaction fluoride(in) = fluoride(out). With respect to regulation, na(+) is not transported, but it plays an essential structural role and its presence is essential for fluoride channel function. Fluoride-specific ion channel. Important for reducing fluoride concentration in the cell, thus reducing its toxicity. The chain is Fluoride-specific ion channel FluC from Pseudomonas putida (strain ATCC 700007 / DSM 6899 / JCM 31910 / BCRC 17059 / LMG 24140 / F1).